The chain runs to 455 residues: Kynurenine 3-monooxygenase (455 aa).

This sequence belongs to the aromatic-ring hydroxylase family. KMO subfamily. FAD is required as a cofactor.

The catalysed reaction is L-kynurenine + NADPH + O2 + H(+) = 3-hydroxy-L-kynurenine + NADP(+) + H2O. It functions in the pathway cofactor biosynthesis; NAD(+) biosynthesis; quinolinate from L-kynurenine: step 1/3. Catalyzes the hydroxylation of L-kynurenine (L-Kyn) to form 3-hydroxy-L-kynurenine (L-3OHKyn). Required for synthesis of quinolinic acid. This is Kynurenine 3-monooxygenase from Xanthomonas oryzae pv. oryzae (strain KACC10331 / KXO85).